The following is a 322-amino-acid chain: Transaldolase (322 aa).

The Schiff-base intermediate with substrate role is filled by Lys136.

It belongs to the transaldolase family. Type 1 subfamily. Homodimer.

It localises to the cytoplasm. It catalyses the reaction D-sedoheptulose 7-phosphate + D-glyceraldehyde 3-phosphate = D-erythrose 4-phosphate + beta-D-fructose 6-phosphate. It functions in the pathway carbohydrate degradation; pentose phosphate pathway; D-glyceraldehyde 3-phosphate and beta-D-fructose 6-phosphate from D-ribose 5-phosphate and D-xylulose 5-phosphate (non-oxidative stage): step 2/3. In terms of biological role, transaldolase is important for the balance of metabolites in the pentose-phosphate pathway. This chain is Transaldolase, found in Xanthomonas campestris pv. campestris (strain B100).